A 23-amino-acid chain; its full sequence is Melittin-related peptide AK-23-1 (23 aa).

K23 carries the post-translational modification Lysine amide.

Expressed by the skin glands.

Its subcellular location is the secreted. This is Melittin-related peptide AK-23-1 from Rana arvalis (Moor frog).